We begin with the raw amino-acid sequence, 386 residues long: Succinate--CoA ligase [ADP-forming] subunit beta (386 aa).

Residues 9–244 (KELLRSYGVP…ETEEDPREVE (236 aa)) form the ATP-grasp domain. ATP-binding positions include K46, 53–55 (GRG), E99, C102, and E107. N199 and D213 together coordinate Mg(2+). Residues N264 and 321-323 (GIM) contribute to the substrate site.

It belongs to the succinate/malate CoA ligase beta subunit family. Heterotetramer of two alpha and two beta subunits. Mg(2+) is required as a cofactor.

The enzyme catalyses succinate + ATP + CoA = succinyl-CoA + ADP + phosphate. It catalyses the reaction GTP + succinate + CoA = succinyl-CoA + GDP + phosphate. It functions in the pathway carbohydrate metabolism; tricarboxylic acid cycle; succinate from succinyl-CoA (ligase route): step 1/1. Succinyl-CoA synthetase functions in the citric acid cycle (TCA), coupling the hydrolysis of succinyl-CoA to the synthesis of either ATP or GTP and thus represents the only step of substrate-level phosphorylation in the TCA. The beta subunit provides nucleotide specificity of the enzyme and binds the substrate succinate, while the binding sites for coenzyme A and phosphate are found in the alpha subunit. This is Succinate--CoA ligase [ADP-forming] subunit beta from Exiguobacterium sibiricum (strain DSM 17290 / CCUG 55495 / CIP 109462 / JCM 13490 / 255-15).